Consider the following 313-residue polypeptide: Porphobilinogen deaminase (313 aa).

An S-(dipyrrolylmethanemethyl)cysteine modification is found at Cys-242.

The protein belongs to the HMBS family. Monomer. It depends on dipyrromethane as a cofactor.

It carries out the reaction 4 porphobilinogen + H2O = hydroxymethylbilane + 4 NH4(+). Its pathway is porphyrin-containing compound metabolism; protoporphyrin-IX biosynthesis; coproporphyrinogen-III from 5-aminolevulinate: step 2/4. Tetrapolymerization of the monopyrrole PBG into the hydroxymethylbilane pre-uroporphyrinogen in several discrete steps. This is Porphobilinogen deaminase from Escherichia coli (strain K12 / MC4100 / BW2952).